A 62-amino-acid polypeptide reads, in one-letter code: UPF0434 protein Tola_2233 (62 aa).

Belongs to the UPF0434 family.

The chain is UPF0434 protein Tola_2233 from Tolumonas auensis (strain DSM 9187 / NBRC 110442 / TA 4).